Here is a 189-residue protein sequence, read N- to C-terminus: Endoribonuclease YbeY (189 aa).

Over residues 1–10 (MKERSSSPGT) the composition is skewed to polar residues. The tract at residues 1-23 (MKERSSSPGTPDSGRRARPKPAK) is disordered. Zn(2+)-binding residues include H141, H145, and H151.

This sequence belongs to the endoribonuclease YbeY family. Requires Zn(2+) as cofactor.

The protein localises to the cytoplasm. Single strand-specific metallo-endoribonuclease involved in late-stage 70S ribosome quality control and in maturation of the 3' terminus of the 16S rRNA. This chain is Endoribonuclease YbeY, found in Nitrosospira multiformis (strain ATCC 25196 / NCIMB 11849 / C 71).